A 546-amino-acid chain; its full sequence is Probable ganciclovir kinase (546 aa).

The segment covering 1–11 has biased composition (polar residues); that stretch reads MEQLKTPQNQK. The disordered stretch occupies residues 1-29; sequence MEQLKTPQNQKTRPRNMLPKKKGKELKKR. Over residues 12–29 the composition is skewed to basic residues; the sequence is TRPRNMLPKKKGKELKKR. Residues 185-193 and K202 contribute to the ATP site; that span reads LGSGSYGMV. The Proton acceptor role is filled by D297.

This sequence belongs to the protein kinase superfamily. Tyr protein kinase family. HCMV ganciclovir subfamily.

In terms of biological role, phosphorylates the antiviral nucleoside analog ganciclovir. In Human herpesvirus 7 (strain JI) (HHV-7), this protein is Probable ganciclovir kinase (U69).